The chain runs to 198 residues: ATP-dependent Clp protease proteolytic subunit 2 (198 aa).

Ser-94 (nucleophile) is an active-site residue. The active site involves His-119.

Belongs to the peptidase S14 family. As to quaternary structure, fourteen ClpP subunits assemble into 2 heptameric rings which stack back to back to give a disk-like structure with a central cavity, resembling the structure of eukaryotic proteasomes.

The protein resides in the cytoplasm. It carries out the reaction Hydrolysis of proteins to small peptides in the presence of ATP and magnesium. alpha-casein is the usual test substrate. In the absence of ATP, only oligopeptides shorter than five residues are hydrolyzed (such as succinyl-Leu-Tyr-|-NHMec, and Leu-Tyr-Leu-|-Tyr-Trp, in which cleavage of the -Tyr-|-Leu- and -Tyr-|-Trp bonds also occurs).. Its function is as follows. Cleaves peptides in various proteins in a process that requires ATP hydrolysis. Has a chymotrypsin-like activity. Plays a major role in the degradation of misfolded proteins. This chain is ATP-dependent Clp protease proteolytic subunit 2, found in Borreliella burgdorferi (strain ATCC 35210 / DSM 4680 / CIP 102532 / B31) (Borrelia burgdorferi).